The primary structure comprises 467 residues: MKESLKDRIRLWKRLYVNAFENALNAIPNVKGVLLAYNTNIDAIKYLDKDDLEKRVTEIGKEKVFEIIENPPEKISSIEELLGGILRSIKLGKAMEWFVESEEVRRYLREWGWDELRIGGQAGIMANLLGGVYRIPTIVHVPQNPKLQAELFVDGPIYVPVFEGNKLKLVHPKDAIAEEEELIHYIYEFPRGFQVFDVQAPRENRFIANADDYNARVYMRREFREGFEEITRNVELAIISGLQVLKEYYPDGTTYRDVLDRVESHLNILNRYNVKSHFEFAYTANRRVREALVELLPKFTSVGLNEVELASIMEIIGDEELAKEVLEGHIFSVIDAMNVLMDETGIERIHFHTYGYYLALTQYRGEEVRDALLFASLAAAAKAMKGNLERIEQIRDALSVPTNERAIVLEEELEKEFTEFENGLIDMVDRQLAFVPTKIVASPKSTVGIGDTISSSAFVSEFGMRKR.

Positions 10-467 (RLWKRLYVNA…FVSEFGMRKR (458 aa)) constitute an ADPK domain. D-glucose-binding positions include aspartate 42, glutamate 96, glycine 120, 120 to 121 (GQ), histidine 184, and aspartate 211. Glutamate 279 provides a ligand contact to Mg(2+). Asparagine 305 serves as a coordination point for ADP. Position 308 (glutamate 308) interacts with Mg(2+). ADP-binding positions include 352 to 353 (HT), valine 440, and glycine 450. Position 451 (aspartate 451) interacts with D-glucose. Aspartate 451 provides a ligand contact to Mg(2+). Aspartate 451 functions as the Proton acceptor in the catalytic mechanism.

The protein belongs to the ADP-dependent glucokinase family. In terms of assembly, monomer. Mg(2+) is required as a cofactor.

It localises to the cytoplasm. It carries out the reaction D-glucose + ADP = D-glucose 6-phosphate + AMP + H(+). It catalyses the reaction D-glucosamine + ADP = D-glucosamine 6-phosphate + AMP + H(+). It participates in carbohydrate degradation; glycolysis. Catalyzes the ADP-dependent phosphorylation of D-glucose to D-glucose 6-phosphate and glucosamine to glucosamine 6-phosphate. Can also use CDP as the phosphoryl group donor and D-1,5-anhydroglucitol as the phosphoryl group acceptor. The polypeptide is ADP-dependent glucose/glucosamine kinase (Thermococcus litoralis (strain ATCC 51850 / DSM 5473 / JCM 8560 / NS-C)).